The following is a 356-amino-acid chain: Nicotinate-nucleotide--dimethylbenzimidazole phosphoribosyltransferase (356 aa).

Glu-317 acts as the Proton acceptor in catalysis.

It belongs to the CobT family. Homodimer.

It carries out the reaction 5,6-dimethylbenzimidazole + nicotinate beta-D-ribonucleotide = alpha-ribazole 5'-phosphate + nicotinate + H(+). Its pathway is nucleoside biosynthesis; alpha-ribazole biosynthesis; alpha-ribazole from 5,6-dimethylbenzimidazole: step 1/2. Its function is as follows. Catalyzes the synthesis of alpha-ribazole-5'-phosphate from nicotinate mononucleotide (NAMN) and 5,6-dimethylbenzimidazole (DMB). This Salmonella typhi protein is Nicotinate-nucleotide--dimethylbenzimidazole phosphoribosyltransferase.